Here is a 417-residue protein sequence, read N- to C-terminus: Inner membrane transport protein YnfM (417 aa).

The tract at residues 1 to 22 (MSRTTTVDGAPASDTDKQSISQ) is disordered. At 1–38 (MSRTTTVDGAPASDTDKQSISQPNQFIKRGTPQFMRVT) the chain is on the periplasmic side. Residues 39–59 (LALFSAGLATFALLYCVQPIL) traverse the membrane as a helical segment. Topologically, residues 60–73 (PVLSQEFGLTPANS) are cytoplasmic. The helical transmembrane segment at 74–94 (SISLSISTAMLAIGLLFTGPL) threads the bilayer. Residues 95-101 (SDAIGRK) are Periplasmic-facing. The helical transmembrane segment at 102 to 122 (PVMVTALLLASICTLLSTMMT) threads the bilayer. Residues 123 to 125 (SWH) are Cytoplasmic-facing. Residues 126 to 146 (GILIMRALIGLSLSGVAAVGM) form a helical membrane-spanning segment. The Periplasmic portion of the chain corresponds to 147 to 152 (TYLSEE). Residues 153–173 (IHPSFVAFSMGLYISGNSIGG) traverse the membrane as a helical segment. At 174 to 190 (MSGRLISGVFTDFFNWR) the chain is on the cytoplasmic side. Residues 191–211 (IALAAIGCFALASALMFWKIL) traverse the membrane as a helical segment. Residues 212-241 (PESRHFRPTSLRPKTLFINFRLHWRDRGLP) lie on the Periplasmic side of the membrane. A helical transmembrane segment spans residues 242-262 (LLFAEGFLLMGSFVTLFNYIG). The Cytoplasmic portion of the chain corresponds to 263-264 (YR). The chain crosses the membrane as a helical span at residues 265 to 285 (LMLSPWHVSQAVVGLLSLAYL). The Periplasmic segment spans residues 286 to 315 (TGTWSSPKAGTMTTRYGRGPVMLFSTGVML). Residues 316-336 (FGLLMTLFSSLWLIFAGMLLF) traverse the membrane as a helical segment. The Cytoplasmic segment spans residues 337 to 364 (SAGFFAAHSVASSWIGPRAKRAKGQASS). Residues 365-385 (LYLFSYYLGSSIAGTLGGVFW) form a helical membrane-spanning segment. The Periplasmic portion of the chain corresponds to 386–387 (HN). Residues 388-408 (YGWNGVGAFIALMLVIALLVG) form a helical membrane-spanning segment. Residues 409–417 (TRLHRRLHA) lie on the Cytoplasmic side of the membrane.

It belongs to the major facilitator superfamily.

The protein localises to the cell inner membrane. This Escherichia coli (strain K12) protein is Inner membrane transport protein YnfM (ynfM).